A 426-amino-acid polypeptide reads, in one-letter code: C4-dicarboxylate transport protein (426 aa).

Helical transmembrane passes span serine 4–glycine 24, leucine 44–methionine 64, isoleucine 76–valine 96, isoleucine 142–phenylalanine 162, valine 184–methionine 204, leucine 222–alanine 242, isoleucine 326–valine 346, and isoleucine 352–isoleucine 372.

The protein belongs to the dicarboxylate/amino acid:cation symporter (DAACS) (TC 2.A.23) family.

The protein resides in the cell inner membrane. Its function is as follows. Responsible for the transport of dicarboxylates such as succinate, fumarate, and malate from the periplasm across the membrane. The protein is C4-dicarboxylate transport protein of Edwardsiella ictaluri (strain 93-146).